The primary structure comprises 371 residues: Queuine tRNA-ribosyltransferase (371 aa).

Asp90 acts as the Proton acceptor in catalysis. Substrate contacts are provided by residues 90 to 94 (DSGGF), Asp144, Gln189, and Gly215. Residues 246–252 (GVGTPEN) form an RNA binding region. Asp265 (nucleophile) is an active-site residue. Positions 270-274 (TRNAR) are RNA binding; important for wobble base 34 recognition. Positions 303, 305, 308, and 334 each coordinate Zn(2+).

Belongs to the queuine tRNA-ribosyltransferase family. In terms of assembly, homodimer. Within each dimer, one monomer is responsible for RNA recognition and catalysis, while the other monomer binds to the replacement base PreQ1. The cofactor is Zn(2+).

It catalyses the reaction 7-aminomethyl-7-carbaguanine + guanosine(34) in tRNA = 7-aminomethyl-7-carbaguanosine(34) in tRNA + guanine. Its pathway is tRNA modification; tRNA-queuosine biosynthesis. Functionally, catalyzes the base-exchange of a guanine (G) residue with the queuine precursor 7-aminomethyl-7-deazaguanine (PreQ1) at position 34 (anticodon wobble position) in tRNAs with GU(N) anticodons (tRNA-Asp, -Asn, -His and -Tyr). Catalysis occurs through a double-displacement mechanism. The nucleophile active site attacks the C1' of nucleotide 34 to detach the guanine base from the RNA, forming a covalent enzyme-RNA intermediate. The proton acceptor active site deprotonates the incoming PreQ1, allowing a nucleophilic attack on the C1' of the ribose to form the product. After dissociation, two additional enzymatic reactions on the tRNA convert PreQ1 to queuine (Q), resulting in the hypermodified nucleoside queuosine (7-(((4,5-cis-dihydroxy-2-cyclopenten-1-yl)amino)methyl)-7-deazaguanosine). The chain is Queuine tRNA-ribosyltransferase from Helicobacter acinonychis (strain Sheeba).